Reading from the N-terminus, the 434-residue chain is F-box/kelch-repeat protein At1g55270 (434 aa).

Residues 76–122 (PPLLPGLPDDLAVACLIRVPRAEHRKLRLVCKRWYRLASGNFFYSQR) enclose the F-box domain. Kelch repeat units lie at residues 129 to 178 (EEWV…VLSG), 180 to 227 (HLYL…VINN), 229 to 276 (LYVA…VYDK), 278 to 321 (WFLK…SLNG), and 325 to 371 (GLDC…LHNK).

The polypeptide is F-box/kelch-repeat protein At1g55270 (Arabidopsis thaliana (Mouse-ear cress)).